The sequence spans 185 residues: MALDKLLEHEAQAEIERIRAEARDRAQQILASARERADALLESRRRLLETQRQAALVRARSAADLELSAARLTASEQGMAEVYRLVEGHLREITGLPEYREILARLIAEARQAIPEAEAVEVNPADLALARELVTDLSVRENPAIQGGVRVVARGGKSGITNTLAGRLDRLRGELAPQVSRLLAE.

The protein belongs to the V-ATPase E subunit family.

Its function is as follows. Produces ATP from ADP in the presence of a proton gradient across the membrane. This is V-type ATP synthase subunit E from Deinococcus geothermalis (strain DSM 11300 / CIP 105573 / AG-3a).